A 458-amino-acid chain; its full sequence is PH domain-containing protein DDB_G0274775 (458 aa).

Positions 15–112 (PSDREGWLTK…WMESIKRNLD (98 aa)) constitute a PH domain. The tract at residues 111-154 (LDGEGGMKSGGNDIVSSPKINSEPTPKVNQNGSAPEKSSLSSPR) is disordered. Positions 124–142 (IVSSPKINSEPTPKVNQNG) are enriched in polar residues. Residues 143–154 (SAPEKSSLSSPR) show a composition bias toward low complexity.

This Dictyostelium discoideum (Social amoeba) protein is PH domain-containing protein DDB_G0274775.